The primary structure comprises 427 residues: Histidinol dehydrogenase (427 aa).

3 residues coordinate NAD(+): tyrosine 127, glutamine 185, and asparagine 208. Positions 232, 254, and 257 each coordinate substrate. Zn(2+) is bound by residues glutamine 254 and histidine 257. Active-site proton acceptor residues include glutamate 321 and histidine 322. Substrate is bound by residues histidine 322, aspartate 355, glutamate 409, and histidine 414. Residue aspartate 355 coordinates Zn(2+). Residue histidine 414 coordinates Zn(2+).

Belongs to the histidinol dehydrogenase family. Requires Zn(2+) as cofactor.

The catalysed reaction is L-histidinol + 2 NAD(+) + H2O = L-histidine + 2 NADH + 3 H(+). It functions in the pathway amino-acid biosynthesis; L-histidine biosynthesis; L-histidine from 5-phospho-alpha-D-ribose 1-diphosphate: step 9/9. Its function is as follows. Catalyzes the sequential NAD-dependent oxidations of L-histidinol to L-histidinaldehyde and then to L-histidine. This Haemophilus influenzae (strain 86-028NP) protein is Histidinol dehydrogenase.